Consider the following 726-residue polypeptide: Disintegrin and metalloproteinase domain-containing protein 20 (726 aa).

Positions 1–31 (MAVGEPLVHIRVTLLLLWFGMFLSISGHSQA) are cleaved as a signal peptide. A propeptide spanning residues 32-206 (RPSQYFTSPE…SSFVGWWTHQ (175 aa)) is cleaved from the precursor. Positions 171-178 (MRCGLTEE) match the Cysteine switch motif. Cys-173 contacts Zn(2+). 2 N-linked (GlcNAc...) asparagine glycosylation sites follow: Asn-191 and Asn-226. The region spanning 207–400 (RFVELVVVVD…SGLCIQPPPY (194 aa)) is the Peptidase M12B domain. Topologically, residues 207-693 (RFVELVVVVD…GLNVMGKLRY (487 aa)) are extracellular. Cystine bridges form between Cys-317–Cys-394, Cys-357–Cys-379, and Cys-359–Cys-364. Residue His-342 coordinates Zn(2+). The active site involves Glu-343. Positions 346 and 352 each coordinate Zn(2+). N-linked (GlcNAc...) asparagine glycosylation is found at Asn-378, Asn-438, Asn-479, and Asn-587. The region spanning 407 to 493 (LKYCGNLVVE…QCPDDVYVQD (87 aa)) is the Disintegrin domain. Cys-465 and Cys-485 are oxidised to a cystine. Disulfide bonds link Cys-635-Cys-646, Cys-640-Cys-652, and Cys-654-Cys-663. Residues 635–663 (CQPKTCNMRGICNNKQHCHCNHEWAPPYC) form the EGF-like domain. Residues 694–714 (LSLLCLLPLVAFLLFCLHVLF) form a helical membrane-spanning segment. The Cytoplasmic portion of the chain corresponds to 715 to 726 (KKRTKSKEDEEG).

It depends on Zn(2+) as a cofactor. Post-translationally, has no obvious cleavage site for furin endopeptidase, suggesting that the proteolytic processing is regulated. As to expression, testis specific.

The protein localises to the membrane. Its function is as follows. May be involved in sperm maturation and/or fertilization. In Homo sapiens (Human), this protein is Disintegrin and metalloproteinase domain-containing protein 20 (ADAM20).